The chain runs to 962 residues: Thrombospondin-3a (962 aa).

The signal sequence occupies residues 1–23 (MEQMFVHIWVSLVVLMSVWSAQS). A Laminin G-like domain is found at 24–196 (DKKQDVPVID…MDTLKLALGG (173 aa)). Residues 277–318 (PRSRCQPNPCFKGVSCMETFEYPGYRCGPCPDGMTGNGTHCQ) form the EGF-like 1 domain. Cystine bridges form between C281/C292, C286/C303, C306/C317, C323/C335, C329/C344, C347/C371, C377/C390, C384/C399, C402/C414, C420/C434, C428/C444, C446/C457, C473/C480, C485/C505, C521/C541, C544/C564, C580/C600, C603/C623, C641/C661, and C684/C704. An N-linked (GlcNAc...) asparagine glycan is attached at N313. The EGF-like 2; calcium-binding domain maps to 319-358 (DIDECSEAQPCYTPGACVNTARGFTCESCPPGMWGPPLSG). The region spanning 373-412 (DIDECVDLANACTPNSVCINIIGSFRCGQCKTGYVGNQTA) is the EGF-like 3; calcium-binding domain. N409 carries an N-linked (GlcNAc...) asparagine glycan. In terms of domain architecture, EGF-like 4 spans 416-458 (PRKSCSSLSFNPCDANAHCVMQRNGDVSCACNVGWAGNGHTCG). 8 TSP type-3 repeats span residues 459-493 (KDTD…NSGQ), 494-529 (EDAD…NKDQ), 530-552 (QNSD…NIDQ), 553-588 (KDTD…NPMQ), 589-611 (TDRD…NPMQ), 612-649 (TDVD…NSSQ), 650-692 (LDSD…NPNQ), and 693-728 (KDSD…EVTL). The disordered stretch occupies residues 548–704 (PNIDQKDTDS…SDSNGVGDVC (157 aa)). Residues 557 to 570 (SNGEGDACDDDIDG) show a composition bias toward acidic residues. The segment covering 631 to 641 (GDGHQDTRDNC) has biased composition (basic and acidic residues). N646 carries N-linked (GlcNAc...) asparagine glycosylation. The span at 652–669 (SDNDGIGDDCDEDDDNDG) shows a compositional bias: acidic residues. N710 carries an N-linked (GlcNAc...) asparagine glycan. Residues C720 and C941 are joined by a disulfide bond. Positions 732-946 (RAYQTVILDP…LRYRCNDTVP (215 aa)) constitute a TSP C-terminal domain. N942 carries an N-linked (GlcNAc...) asparagine glycan.

The protein belongs to the thrombospondin family. In terms of assembly, oligomer; disulfide-linked.

Its function is as follows. Adhesive glycoprotein that mediates cell-to-cell and cell-to-matrix interactions. Can bind to fibrinogen, fibronectin, laminin and type V collagen. The chain is Thrombospondin-3a (thbs3a) from Danio rerio (Zebrafish).